Reading from the N-terminus, the 269-residue chain is Interleukin-1 beta (269 aa).

Positions 1-116 (MAEVPELASE…TRNNDACVHD (116 aa)) are excised as a propeptide.

The protein belongs to the IL-1 family. In terms of assembly, monomer. In its precursor form, weakly interacts with full-length MEFV; the mature cytokine does not interact at all. Interacts with integrins ITGAV:ITGBV and ITGA5:ITGB1; integrin-binding is required for IL1B signaling. Interacts with cargo receptor TMED10; the interaction is direct and is required for the secretion of IL1B mature form. Interacts with HSP90AB1; the interaction facilitates cargo translocation into the ERGIC. Interacts with HSP90B1; the interaction facilitates cargo translocation into the ERGIC.

It localises to the cytoplasm. It is found in the cytosol. The protein localises to the secreted. The protein resides in the lysosome. Its subcellular location is the extracellular exosome. In terms of biological role, potent pro-inflammatory cytokine. Initially discovered as the major endogenous pyrogen, induces prostaglandin synthesis, neutrophil influx and activation, T-cell activation and cytokine production, B-cell activation and antibody production, and fibroblast proliferation and collagen production. Promotes Th17 differentiation of T-cells. Synergizes with IL12/interleukin-12 to induce IFNG synthesis from T-helper 1 (Th1) cells. Plays a role in angiogenesis by inducing VEGF production synergistically with TNF and IL6. Involved in transduction of inflammation downstream of pyroptosis: its mature form is specifically released in the extracellular milieu by passing through the gasdermin-D (GSDMD) pore. The protein is Interleukin-1 beta (IL1B) of Macaca mulatta (Rhesus macaque).